Reading from the N-terminus, the 944-residue chain is Valine--tRNA ligase (944 aa).

The 'HIGH' region motif lies at 43-53; the sequence is PNVTGTLHMGH. Positions 550 to 554 match the 'KMSKS' region motif; the sequence is KMSKS. An ATP-binding site is contributed by K553. Residues 878 to 944 adopt a coiled-coil conformation; sequence LVDMDAERTR…TGLREQRAKL (67 aa).

This sequence belongs to the class-I aminoacyl-tRNA synthetase family. ValS type 1 subfamily. As to quaternary structure, monomer.

Its subcellular location is the cytoplasm. The enzyme catalyses tRNA(Val) + L-valine + ATP = L-valyl-tRNA(Val) + AMP + diphosphate. In terms of biological role, catalyzes the attachment of valine to tRNA(Val). As ValRS can inadvertently accommodate and process structurally similar amino acids such as threonine, to avoid such errors, it has a 'posttransfer' editing activity that hydrolyzes mischarged Thr-tRNA(Val) in a tRNA-dependent manner. This Xanthomonas campestris pv. campestris (strain 8004) protein is Valine--tRNA ligase.